The chain runs to 391 residues: tRNA (cytosine(38)-C(5))-methyltransferase (391 aa).

The region spanning 4–391 is the SAM-dependent MTase C5-type domain; that stretch reads LRVLELYSGV…VAKLIKILYE (388 aa). S-adenosyl-L-methionine contacts are provided by residues 13–15, aspartate 34, 57–58, and serine 76; these read VGG and IE. Residue cysteine 79 is part of the active site. Serine 376 is an S-adenosyl-L-methionine binding site.

This sequence belongs to the class I-like SAM-binding methyltransferase superfamily. C5-methyltransferase family. In terms of tissue distribution, ubiquitous. Higher expression in testis, ovary and thymus and at much lower levels in spleen, prostate, colon, small intestine, and peripheral blood leukocytes.

The protein localises to the cytoplasm. It catalyses the reaction cytidine(38) in tRNA + S-adenosyl-L-methionine = 5-methylcytidine(38) in tRNA + S-adenosyl-L-homocysteine + H(+). Functionally, specifically methylates cytosine 38 in the anticodon loop of tRNA(Asp). Has higher activity on tRNA(Asp) modified with queuosine at position 34. In Homo sapiens (Human), this protein is tRNA (cytosine(38)-C(5))-methyltransferase (TRDMT1).